The chain runs to 261 residues: Indole-3-glycerol phosphate synthase (261 aa).

Belongs to the TrpC family.

It catalyses the reaction 1-(2-carboxyphenylamino)-1-deoxy-D-ribulose 5-phosphate + H(+) = (1S,2R)-1-C-(indol-3-yl)glycerol 3-phosphate + CO2 + H2O. It participates in amino-acid biosynthesis; L-tryptophan biosynthesis; L-tryptophan from chorismate: step 4/5. The polypeptide is Indole-3-glycerol phosphate synthase (Burkholderia multivorans (strain ATCC 17616 / 249)).